Reading from the N-terminus, the 476-residue chain is Dermokine (476 aa).

A signal peptide spans 1–21 (MKFQGPLACLLLALCLGSGEA). Composition is skewed to gly residues over residues 153–169 (SQGGLGGQGQGNPGGLG), 193–202 (WGQGGNGGPP), 236–259 (GSGGGSSNSGGGSGSQSGSSGSGS), and 268–298 (SSGGSSSGSSSGGSSGGSSGGSSGNSGGSRG). The disordered stretch occupies residues 153-351 (SQGGLGGQGQ…ESGIQNSETS (199 aa)). The segment covering 299–315 (DSGSESSWGSSTGSSSG) has biased composition (low complexity). Gly residues predominate over residues 316 to 326 (NHGGSGGGNGH).

The protein belongs to the dermokine family. In terms of assembly, homooligomer. Seems to be able to homodimerize and homotrimerize. O-glycosylated. As to expression, expressed in epidermis; in the spinous and granular layers and in placenta. Also found in the epithelia of the small intestine, macrophages of the lung and endothelial cells of the lung. Isoform 15 is expressed in epidermis and placenta. Isoform 1 is expressed in epidermis.

The protein localises to the secreted. In terms of biological role, may act as a soluble regulator of keratinocyte differentiation. The polypeptide is Dermokine (DMKN) (Homo sapiens (Human)).